Here is a 499-residue protein sequence, read N- to C-terminus: MPVLLPSTDPGQDSRVGAPEWRQAAKATSRKAHLLTDRCGQEAVTMWQPKDSVLDPNVAHHLGRAAYMEPWRFRVEMLKGGGTLEKPPPGEGVTLWKGKMKPPAWYARLPLPMHRDARAQQTAEVVHAHARGARLTAARLGRAQHQINGQLRLLLRQREATDRRLSEVRKGLLINQQSVKLRGYRPKCEKIPDKADSLLVWEKKELKSMKRKMEKDMEISEDLLKALASCRDTLDFYCQERLQAVELMNQPLDKVLEQAGRHSWVDITRPPTPRTQGLKTPPPDPIGTYTPACAKALFEAKRLLMESKDILTEMAKNEVDIQNQQQEISNRVCSSLAQKMRETLELKERMTMTLGLMRGTIHRCMKFNQEMYVTRGIIKGPLLKRNLEAREKLNRPLVRMYQRHVGTQLPEATRLAQGTDLLTRHNLHMEKNLKELRTTHDNLAWGLNCKKIGHDVDYDVVRLRLRQRHPHVCYEQAQRLVNDWDPPTPARSQTNTASK.

The residue at position 14 (Ser14) is a Phosphoserine. Positions 201-225 (WEKKELKSMKRKMEKDMEISEDLLK) form a coiled coil. A disordered region spans residues 265–286 (VDITRPPTPRTQGLKTPPPDPI). Residues 308 to 328 (KDILTEMAKNEVDIQNQQQEI) are a coiled coil. A Phosphotyrosine modification is found at Tyr372.

Microtubule inner protein component of sperm flagellar doublet microtubules.

The protein localises to the cytoplasm. Its subcellular location is the cytoskeleton. The protein resides in the flagellum axoneme. In terms of biological role, microtubule inner protein (MIP) part of the dynein-decorated doublet microtubules (DMTs) in sperm flagellar axoneme, which is required for motile flagellum beating. Forms an extensive interaction network cross-linking the lumen of axonemal doublet microtubules. The protein is Tektin-like protein 1 of Mus musculus (Mouse).